Consider the following 40-residue polypeptide: Auxin-responsive endogenous peptide 1 (40 aa).

The helical transmembrane segment at Leu7–His29 threads the bilayer.

Expressed in cotyledons, hypocotyls, roots, newly developing leaves and shoot apical meristem. Not detected in flowers, siliques or mature leaves.

The protein localises to the cytoplasm. Its subcellular location is the nucleus. The protein resides in the membrane. In terms of biological role, negative regulator of the auxin response. In Arabidopsis thaliana (Mouse-ear cress), this protein is Auxin-responsive endogenous peptide 1.